The primary structure comprises 890 residues: Protein translocase subunit SecA (890 aa).

Residues glutamine 85, 103–107 (GEGKT), and aspartate 491 each bind ATP.

Belongs to the SecA family. As to quaternary structure, monomer and homodimer. Part of the essential Sec protein translocation apparatus which comprises SecA, SecYEG and auxiliary proteins SecDF. Other proteins may also be involved.

It localises to the cell membrane. The protein localises to the cytoplasm. It catalyses the reaction ATP + H2O + cellular proteinSide 1 = ADP + phosphate + cellular proteinSide 2.. Functionally, part of the Sec protein translocase complex. Interacts with the SecYEG preprotein conducting channel. Has a central role in coupling the hydrolysis of ATP to the transfer of proteins into and across the cell membrane, serving as an ATP-driven molecular motor driving the stepwise translocation of polypeptide chains across the membrane. The protein is Protein translocase subunit SecA of Mycoplasmoides gallisepticum (strain R(low / passage 15 / clone 2)) (Mycoplasma gallisepticum).